Reading from the N-terminus, the 120-residue chain is Secreted RxLR effector protein 29 (120 aa).

The first 21 residues, 1–21 (MRRTAFIVLSLVALIAPCVTS), serve as a signal peptide directing secretion. The short motif at 47–64 (RHLRSEANGRLAVVDEEK) is the RxLR-dEER element.

This sequence belongs to the RxLR effector family.

The protein resides in the secreted. It is found in the host cytoplasm. Its subcellular location is the host nucleus. Functionally, effector that acts as a broad suppressor of cell death to interrupt plant immunity. Inhibits cell death induced by cell death-inducing proteins, including the PAMP elicitor INF1 from P.infestans. In Plasmopara viticola (Downy mildew of grapevine), this protein is Secreted RxLR effector protein 29.